A 340-amino-acid chain; its full sequence is Putative transport protein AF_1800 (340 aa).

7 helical membrane-spanning segments follow: residues 7–27, 57–77, 140–160, 193–213, 225–245, 260–280, and 290–310; these read LVLLLSILVVLALTFYFFTPL, SVIATAIVILPISVLMFYGLI, TLLILNFFISIVVCFYALADM, LWFGNFVVAILIGLVSLPFFL, GLMFLAALIPIFAEWMIILPV, FLLIGVVFLYVLPELILRPYF, and LVLMLAFIGGGLVGGISGFFI.

Belongs to the autoinducer-2 exporter (AI-2E) (TC 2.A.86) family.

Its subcellular location is the cell membrane. The sequence is that of Putative transport protein AF_1800 from Archaeoglobus fulgidus (strain ATCC 49558 / DSM 4304 / JCM 9628 / NBRC 100126 / VC-16).